The primary structure comprises 288 residues: Bifunctional protein FolD (288 aa).

Residues 166-168 (GAS) and Ile232 each bind NADP(+).

Belongs to the tetrahydrofolate dehydrogenase/cyclohydrolase family. In terms of assembly, homodimer.

It carries out the reaction (6R)-5,10-methylene-5,6,7,8-tetrahydrofolate + NADP(+) = (6R)-5,10-methenyltetrahydrofolate + NADPH. The enzyme catalyses (6R)-5,10-methenyltetrahydrofolate + H2O = (6R)-10-formyltetrahydrofolate + H(+). The protein operates within one-carbon metabolism; tetrahydrofolate interconversion. In terms of biological role, catalyzes the oxidation of 5,10-methylenetetrahydrofolate to 5,10-methenyltetrahydrofolate and then the hydrolysis of 5,10-methenyltetrahydrofolate to 10-formyltetrahydrofolate. This Erwinia tasmaniensis (strain DSM 17950 / CFBP 7177 / CIP 109463 / NCPPB 4357 / Et1/99) protein is Bifunctional protein FolD.